Reading from the N-terminus, the 574-residue chain is Septation ring formation regulator EzrA (574 aa).

Topologically, residues 1–7 are extracellular; the sequence is MSSGIIL. Residues 8-26 traverse the membrane as a helical segment; it reads LIVAIVLLVIIAYLVGVII. Topologically, residues 27–574 are cytoplasmic; the sequence is RKRNDSLITS…YEKTREHIRF (548 aa). 3 coiled-coil regions span residues 102 to 141, 274 to 350, and 459 to 520; these read NFIR…EEKN, ELVT…ETES, and QLEA…SFEA.

It belongs to the EzrA family.

It is found in the cell membrane. Its function is as follows. Negative regulator of FtsZ ring formation; modulates the frequency and position of FtsZ ring formation. Inhibits FtsZ ring formation at polar sites. Interacts either with FtsZ or with one of its binding partners to promote depolymerization. The protein is Septation ring formation regulator EzrA of Streptococcus pyogenes serotype M6 (strain ATCC BAA-946 / MGAS10394).